Consider the following 106-residue polypeptide: Protein S40-3 (106 aa).

The tract at residues 1 to 65 (MSEEFQESEV…TEEEGEMTPP (65 aa)) is disordered. Residues 16-41 (SFTRKDNKISHNNENYERKSTEKDKI) are compositionally biased toward basic and acidic residues.

The protein belongs to the senescence regulator S40 family.

It localises to the nucleus. Regulates senescence either by modulating WRKY53 or by activating SAG12. Affects the natural variation of cyst nematodes sex ratio and susceptibility to parasitic nematodes, depending on single nucleotide polymorphism (SNPs) between cultivars. In Arabidopsis thaliana (Mouse-ear cress), this protein is Protein S40-3.